Reading from the N-terminus, the 353-residue chain is UDP-N-acetylglucosamine--N-acetylmuramyl-(pentapeptide) pyrophosphoryl-undecaprenol N-acetylglucosamine transferase (353 aa).

UDP-N-acetyl-alpha-D-glucosamine contacts are provided by residues 10 to 12 (TGG), Asn-124, Ser-183, and Gln-283.

The protein belongs to the glycosyltransferase 28 family. MurG subfamily.

It localises to the cell inner membrane. It carries out the reaction di-trans,octa-cis-undecaprenyl diphospho-N-acetyl-alpha-D-muramoyl-L-alanyl-D-glutamyl-meso-2,6-diaminopimeloyl-D-alanyl-D-alanine + UDP-N-acetyl-alpha-D-glucosamine = di-trans,octa-cis-undecaprenyl diphospho-[N-acetyl-alpha-D-glucosaminyl-(1-&gt;4)]-N-acetyl-alpha-D-muramoyl-L-alanyl-D-glutamyl-meso-2,6-diaminopimeloyl-D-alanyl-D-alanine + UDP + H(+). It functions in the pathway cell wall biogenesis; peptidoglycan biosynthesis. Functionally, cell wall formation. Catalyzes the transfer of a GlcNAc subunit on undecaprenyl-pyrophosphoryl-MurNAc-pentapeptide (lipid intermediate I) to form undecaprenyl-pyrophosphoryl-MurNAc-(pentapeptide)GlcNAc (lipid intermediate II). The polypeptide is UDP-N-acetylglucosamine--N-acetylmuramyl-(pentapeptide) pyrophosphoryl-undecaprenol N-acetylglucosamine transferase (Helicobacter pylori (strain P12)).